The chain runs to 720 residues: Serrate RNA effector molecule (720 aa).

Disordered regions lie at residues 1–192, 288–335, and 361–380; these read MADV…NPQR, LNKS…FTSD, and ENVL…LHSG. Positions 33 to 47 are enriched in low complexity; that stretch reads SLPQQEQEQDQQQLP. A compositionally biased stretch (basic and acidic residues) spans 48 to 76; sequence LRRERDSRERRDERDIERPPPNRRERDRS. A phosphoserine mark is found at serine 76, serine 90, and serine 92. The span at 99–115 shows a compositional bias: basic residues; the sequence is DRRHSPPQRRSPPQKRY. Basic and acidic residues-rich tracts occupy residues 116–126 and 136–164; these read RRDDNGYDGRR and PDRR…ERPH. A compositionally biased stretch (polar residues) spans 288–297; it reads LNKSGRTSEP. Residues 368–378 are compositionally biased toward basic and acidic residues; sequence ETEKSGREKLH. Residues 498 to 523 form a C2H2-type zinc finger; the sequence is YGCGAKGCTKLFHAAEFVYKHLKLKH. Disordered stretches follow at residues 543 to 622 and 666 to 687; these read YMND…AFGG and RDPS…APFL. A compositionally biased stretch (basic and acidic residues) spans 570–607; sequence PSMENRLRDDRGGRRERDGRANGNDRNDRSEDQQRGDN. A compositionally biased stretch (gly residues) spans 608-622; it reads DGGNPGEVGYDAFGG. Serine 689 bears the Phosphoserine mark.

It belongs to the ARS2 family. In terms of assembly, interacts with HYL1. Interacts with RCF3, RS40 and RS41. As to expression, expressed in shoot meristems and in emerging organ primordia throughout development.

It is found in the nucleus. It localises to the nucleus speckle. In terms of biological role, acts as a mediator between the cap-binding complex (CBC) and both the pre-mRNA splicing and primary microRNAs (miRNAs) processing machinery. Required for proper processing of primary miRNAs to miRNAs, thereby playing a role in RNA-mediated gene silencing (RNAi) by miRNAs. Does not participate in sense post-transcriptional gene silencing. Acts as a regulator of meristem activity and adaxial leaf fate via the miRNA gene-silencing pathway by regulating the expression of PHB and by limiting the competence of shoot tissue to respond to KNOX expression. Its function is however not limited to miRNA-mediated repression of leaf polarity genes, but rather acts as a general regulator of primary microRNAs processing. Also critical for the accumulation of the trans-acting small interfering RNA (ta-siRNA). Required for pre-mRNA splicing. The protein is Serrate RNA effector molecule (SE) of Arabidopsis thaliana (Mouse-ear cress).